We begin with the raw amino-acid sequence, 76 residues long: Translational regulator CsrA (76 aa).

Belongs to the CsrA/RsmA family. In terms of assembly, homodimer; the beta-strands of each monomer intercalate to form a hydrophobic core, while the alpha-helices form wings that extend away from the core.

It localises to the cytoplasm. A translational regulator that binds mRNA to regulate translation initiation and/or mRNA stability. Usually binds in the 5'-UTR at or near the Shine-Dalgarno sequence preventing ribosome-binding, thus repressing translation. Its main target seems to be the major flagellin gene, while its function is anatagonized by FliW. This Helicobacter pylori (strain P12) protein is Translational regulator CsrA.